The following is a 243-amino-acid chain: 1-(5-phosphoribosyl)-5-[(5-phosphoribosylamino)methylideneamino] imidazole-4-carboxamide isomerase (243 aa).

D8 functions as the Proton acceptor in the catalytic mechanism. D130 (proton donor) is an active-site residue.

This sequence belongs to the HisA/HisF family.

Its subcellular location is the cytoplasm. It carries out the reaction 1-(5-phospho-beta-D-ribosyl)-5-[(5-phospho-beta-D-ribosylamino)methylideneamino]imidazole-4-carboxamide = 5-[(5-phospho-1-deoxy-D-ribulos-1-ylimino)methylamino]-1-(5-phospho-beta-D-ribosyl)imidazole-4-carboxamide. Its pathway is amino-acid biosynthesis; L-histidine biosynthesis; L-histidine from 5-phospho-alpha-D-ribose 1-diphosphate: step 4/9. In Cellvibrio japonicus (strain Ueda107) (Pseudomonas fluorescens subsp. cellulosa), this protein is 1-(5-phosphoribosyl)-5-[(5-phosphoribosylamino)methylideneamino] imidazole-4-carboxamide isomerase.